Consider the following 167-residue polypeptide: Piercer of microtubule wall 1 protein (167 aa).

Residues 1-54 (MSEEKPQQSAEEPEPGEPKAKPAPEEPEPGEPKAKPAPEEPEPGEPKAKPAPEK) are disordered. A compositionally biased stretch (basic and acidic residues) spans 16–54 (GEPKAKPAPEEPEPGEPKAKPAPEEPEPGEPKAKPAPEK).

The protein belongs to the PIERCE1 family. In terms of assembly, microtubule inner protein component of sperm flagellar doublet microtubules. Interacts with CFAP53, ODAD1 and ODAD3; the interactions link the outer dynein arms docking complex (ODA-DC) to the internal microtubule inner proteins (MIP) in cilium axoneme. As to expression, expressed in brain, lung, kidney and testis.

The protein resides in the cytoplasm. The protein localises to the cytoskeleton. Its subcellular location is the cilium axoneme. It localises to the flagellum axoneme. In terms of biological role, microtubule inner protein involved in the attachment of outer dynein arms (ODAs) to dynein-decorated doublet microtubules (DMTs) in cilia axoneme. Functions at the initial step of left-right asymmetry specification of the visceral organs. The sequence is that of Piercer of microtubule wall 1 protein from Mus musculus (Mouse).